A 1311-amino-acid polypeptide reads, in one-letter code: Ubiquitin carboxyl-terminal hydrolase 36 (1311 aa).

Composition is skewed to low complexity over residues 120-134 (AAAATNNGNSNSAGS) and 156-174 (STPTTTTTQTSSSSTSSSS). The interval 120–189 (AAAATNNGNS…NPNELPKPKR (70 aa)) is disordered. The USP domain maps to 212-533 (AGMINVGNTC…NSYIMFYELD (322 aa)). The Nucleophile role is filled by Cys-221. The active-site Proton acceptor is the His-492. Residues 546–575 (NGLRQLSNGHHHHQQQQQQHQQQQQQQPTV) are disordered. The segment covering 560 to 572 (QQQQQHQQQQQQQ) has biased composition (low complexity). Ser-581 carries the post-translational modification Phosphoserine. 3 disordered regions span residues 587 to 620 (TRFIGPQLPPGGLNGYAMTTTTTATNNTTNGHSQ), 640 to 1095 (KFQE…GCLN), and 1136 to 1311 (DHGD…QQQS). 3 stretches are compositionally biased toward low complexity: residues 605–616 (TTTTTATNNTTN), 660–716 (APAV…QQQQ), and 759–774 (TLTLTPTTTPTASTPT). Thr-767 carries the post-translational modification Phosphothreonine. Residues Ser-787 and Ser-789 each carry the phosphoserine modification. Residues 795–826 (SSGTPSSSTPTTTTTAAAAAASSPMQATAAAT) show a composition bias toward low complexity. Residues 836 to 853 (ARKRSLPDHHHHHPHHHV) show a composition bias toward basic residues. The span at 869 to 879 (PATNFNSSSSK) shows a compositional bias: polar residues. Residues 880–889 (QKTDAIDEIF) are compositionally biased toward basic and acidic residues. Over residues 896–905 (NKKRINNKNQ) the composition is skewed to basic residues. Over residues 910–920 (GDEEEDDEETL) the composition is skewed to acidic residues. Composition is skewed to low complexity over residues 925-942 (NNSSRLVSSSTNTSPTTN) and 950-979 (VSSSSSNSKNVSTSAAAAAATTSSSTSTSA). Over residues 980–989 (PPSPKTPPSP) the composition is skewed to pro residues. A Phosphoserine modification is found at Ser-982. Thr-985 is modified (phosphothreonine). Position 988 is a phosphoserine (Ser-988). A compositionally biased stretch (acidic residues) spans 1006–1020 (DDDDDEEEEDEDDEE). The segment covering 1037–1050 (PFSSQQKPTPSPST) has biased composition (low complexity). Ser-1047 is subject to Phosphoserine. At Thr-1050 the chain carries Phosphothreonine. Over residues 1060-1081 (FNGTSSSTPHVGNGYQSEPSTP) the composition is skewed to polar residues. 2 stretches are compositionally biased toward low complexity: residues 1154–1176 (VVTTTTTTTTTTKNTTKTLTADA) and 1204–1221 (TANGKSSGNSNNTTPGYN). A compositionally biased stretch (polar residues) spans 1246 to 1255 (QHASSSYRSN). The span at 1267 to 1276 (GGNGGGGSGG) shows a compositional bias: gly residues.

This sequence belongs to the peptidase C19 family. As to quaternary structure, interacts with atms/PAF1, but not with CycT.

Its subcellular location is the nucleus. It localises to the nucleolus. It carries out the reaction Thiol-dependent hydrolysis of ester, thioester, amide, peptide and isopeptide bonds formed by the C-terminal Gly of ubiquitin (a 76-residue protein attached to proteins as an intracellular targeting signal).. Required for maintaining multiple types of adult stem cells, including male and female germline, epithelial follicle cell and intestinal stem cells. May function as a transcriptional repressor by continually deubiquiting histone H2B at the promoters of genes critical for cellular differentiation, thereby preventing histone H3 'Lys-4' trimethylation (H3K4). Controls selective autophagy activation by ubiquitinated proteins. This is Ubiquitin carboxyl-terminal hydrolase 36 (Usp36) from Drosophila willistoni (Fruit fly).